The primary structure comprises 318 residues: Aspartate carbamoyltransferase catalytic subunit (318 aa).

Carbamoyl phosphate is bound by residues Arg59 and Thr60. An L-aspartate-binding site is contributed by Lys87. The carbamoyl phosphate site is built by Arg109, His137, and Gln140. Residues Arg170 and Arg224 each contribute to the L-aspartate site. Positions 265 and 266 each coordinate carbamoyl phosphate.

Belongs to the aspartate/ornithine carbamoyltransferase superfamily. ATCase family. In terms of assembly, heterododecamer (2C3:3R2) of six catalytic PyrB chains organized as two trimers (C3), and six regulatory PyrI chains organized as three dimers (R2).

It catalyses the reaction carbamoyl phosphate + L-aspartate = N-carbamoyl-L-aspartate + phosphate + H(+). It functions in the pathway pyrimidine metabolism; UMP biosynthesis via de novo pathway; (S)-dihydroorotate from bicarbonate: step 2/3. Catalyzes the condensation of carbamoyl phosphate and aspartate to form carbamoyl aspartate and inorganic phosphate, the committed step in the de novo pyrimidine nucleotide biosynthesis pathway. In Rhizobium etli (strain ATCC 51251 / DSM 11541 / JCM 21823 / NBRC 15573 / CFN 42), this protein is Aspartate carbamoyltransferase catalytic subunit.